Reading from the N-terminus, the 113-residue chain is Hydrogenase maturation factor HypA (113 aa).

Histidine 2 lines the Ni(2+) pocket. Cysteine 73, cysteine 76, cysteine 89, and cysteine 92 together coordinate Zn(2+).

This sequence belongs to the HypA/HybF family.

Functionally, involved in the maturation of [NiFe] hydrogenases. Required for nickel insertion into the metal center of the hydrogenase. This is Hydrogenase maturation factor HypA from Alkalilimnicola ehrlichii (strain ATCC BAA-1101 / DSM 17681 / MLHE-1).